Reading from the N-terminus, the 145-residue chain is Basic phospholipase A2 PC16 (145 aa).

The N-terminal stretch at 1–21 is a signal peptide; the sequence is MYPAHLLLLLAVCVSLLGASA. Positions 22-27 are excised as a propeptide; sequence IPPLPL. 7 cysteine pairs are disulfide-bonded: cysteine 38–cysteine 98, cysteine 54–cysteine 144, cysteine 56–cysteine 72, cysteine 71–cysteine 125, cysteine 78–cysteine 118, cysteine 87–cysteine 111, and cysteine 105–cysteine 116. Positions 55, 57, and 59 each coordinate Ca(2+). Histidine 75 is a catalytic residue. Aspartate 76 is a binding site for Ca(2+). Residue aspartate 119 is part of the active site.

This sequence belongs to the phospholipase A2 family. Group I subfamily. D49 sub-subfamily. Requires Ca(2+) as cofactor.

It is found in the secreted. It carries out the reaction a 1,2-diacyl-sn-glycero-3-phosphocholine + H2O = a 1-acyl-sn-glycero-3-phosphocholine + a fatty acid + H(+). Functionally, PLA2 catalyzes the calcium-dependent hydrolysis of the 2-acyl groups in 3-sn-phosphoglycerides. The polypeptide is Basic phospholipase A2 PC16 (Laticauda laticaudata (Blue-ringed sea krait)).